Reading from the N-terminus, the 147-residue chain is Putative nickel-responsive regulator (147 aa).

The Ni(2+) site is built by His-76, His-87, His-89, and Cys-95.

This sequence belongs to the transcriptional regulatory CopG/NikR family. Ni(2+) serves as cofactor.

Its function is as follows. Transcriptional regulator. This is Putative nickel-responsive regulator from Rhodopseudomonas palustris (strain TIE-1).